A 208-amino-acid chain; its full sequence is Interleukin-6 (208 aa).

Positions 1–29 (MNSRFTSAFTPFAVSLGLLLVMTSAFPTP) are cleaved as a signal peptide. Residue N38 is glycosylated (N-linked (GlcNAc...) asparagine). C72 and C78 are oxidised to a cystine. Residue S81 is modified to Phosphoserine. A disulfide bond links C101 and C111.

It belongs to the IL-6 superfamily. Component of a hexamer of two molecules each of IL6, IL6R and IL6ST; first binds to IL6R to associate with the signaling subunit IL6ST. Interacts with IL6R (via the N-terminal ectodomain); this interaction may be affected by IL6R-binding with SORL1, hence decreasing IL6 cis signaling. Interacts with SORL1 (via the N-terminal ectodomain); this interaction leads to IL6 internalization and lysosomal degradation. May form a trimeric complex with the soluble SORL1 ectodomain and soluble IL6R receptor; this interaction might stabilize circulating IL6, hence promoting IL6 trans signaling.

The protein localises to the secreted. Cytokine with a wide variety of biological functions in immunity, tissue regeneration, and metabolism. Binds to IL6R, then the complex associates to the signaling subunit IL6ST/gp130 to trigger the intracellular IL6-signaling pathway. The interaction with the membrane-bound IL6R and IL6ST stimulates 'classic signaling', whereas the binding of IL6 and soluble IL6R to IL6ST stimulates 'trans-signaling'. Alternatively, 'cluster signaling' occurs when membrane-bound IL6:IL6R complexes on transmitter cells activate IL6ST receptors on neighboring receiver cells. In terms of biological role, IL6 is a potent inducer of the acute phase response. Rapid production of IL6 contributes to host defense during infection and tissue injury, but excessive IL6 synthesis is involved in disease pathology. In the innate immune response, is synthesized by myeloid cells, such as macrophages and dendritic cells, upon recognition of pathogens through toll-like receptors (TLRs) at the site of infection or tissue injury. In the adaptive immune response, is required for the differentiation of B cells into immunoglobulin-secreting cells. Plays a major role in the differentiation of CD4(+) T cell subsets. Essential factor for the development of T follicular helper (Tfh) cells that are required for the induction of germinal-center formation. Required to drive naive CD4(+) T cells to the Th17 lineage. Also required for proliferation of myeloma cells and the survival of plasmablast cells. Its function is as follows. Acts as an essential factor in bone homeostasis and on vessels directly or indirectly by induction of VEGF, resulting in increased angiogenesis activity and vascular permeability. Induces, through 'trans-signaling' and synergistically with IL1B and TNF, the production of VEGF. Involved in metabolic controls, is discharged into the bloodstream after muscle contraction increasing lipolysis and improving insulin resistance. 'Trans-signaling' in central nervous system also regulates energy and glucose homeostasis. Mediates, through GLP-1, crosstalk between insulin-sensitive tissues, intestinal L cells and pancreatic islets to adapt to changes in insulin demand. Also acts as a myokine. Plays a protective role during liver injury, being required for maintenance of tissue regeneration. Also has a pivotal role in iron metabolism by regulating HAMP/hepcidin expression upon inflammation or bacterial infection. Through activation of IL6ST-YAP-NOTCH pathway, induces inflammation-induced epithelial regeneration. The protein is Interleukin-6 (IL6) of Bos taurus (Bovine).